Here is a 242-residue protein sequence, read N- to C-terminus: Succinyl-CoA:3-ketoacid coenzyme A transferase subunit A (242 aa).

33–39 contributes to the CoA binding site; that stretch reads GGFGLCG.

This sequence belongs to the 3-oxoacid CoA-transferase subunit A family. Heterodimer of a subunit A and a subunit B.

The catalysed reaction is a 3-oxo acid + succinyl-CoA = a 3-oxoacyl-CoA + succinate. Its pathway is bacterial outer membrane biogenesis; lipopolysaccharide biosynthesis. This chain is Succinyl-CoA:3-ketoacid coenzyme A transferase subunit A (lpsI), found in Xanthomonas campestris pv. campestris (strain ATCC 33913 / DSM 3586 / NCPPB 528 / LMG 568 / P 25).